The primary structure comprises 384 residues: Troponin T (384 aa).

Residues 1–15 (MSDEEEYSEEEEEVP) are compositionally biased toward acidic residues. Disordered stretches follow at residues 1 to 23 (MSDE…PRHS), 61 to 169 (RAKE…KEQL), 237 to 257 (LRHK…KYPP), and 313 to 384 (PKWF…EEEE). Basic and acidic residues-rich tracts occupy residues 61–74 (RAKE…LKDK) and 81–126 (MRAD…EKKR). Positions 316 to 327 (FGERPGKKKGDP) are enriched in basic and acidic residues. Residues 328–384 (ESPEEEEVKADAGVDDELEEPTFEPEPEPEPEEEAAEEEAEEEEEEEEEEEEEEEEE) show a composition bias toward acidic residues.

This sequence belongs to the troponin T family.

Functionally, troponin T is the tropomyosin-binding subunit of troponin, the thin filament regulatory complex which confers calcium-sensitivity to striated muscle actomyosin ATPase activity. This chain is Troponin T (TNT), found in Periplaneta americana (American cockroach).